We begin with the raw amino-acid sequence, 175 residues long: Protein CENTRORADIALIS-like (175 aa).

It belongs to the phosphatidylethanolamine-binding protein family. In terms of tissue distribution, expressed in tissues surrounding vascular bundles in hypocotyl of 2-week-old plants.

The protein localises to the cytoplasm. May form complexes with phosphorylated ligands by interfering with kinases and their effectors. Can substitute for TERMINAL FLOWER 1 (in vitro). This chain is Protein CENTRORADIALIS-like (CEN), found in Arabidopsis thaliana (Mouse-ear cress).